A 348-amino-acid chain; its full sequence is Rhodopsin (348 aa).

Methionine 1 carries the post-translational modification N-acetylmethionine. Residues 1–36 (MNGTEGPDFYIPMSNQTGVVRSPFEYPQYYLAEPWQ) lie on the Extracellular side of the membrane. Residues asparagine 2 and asparagine 15 are each glycosylated (N-linked (GlcNAc...) asparagine). A helical transmembrane segment spans residues 37 to 61 (FSMLAAYMFLLIVLGFPINFLTLYV). The Cytoplasmic portion of the chain corresponds to 62–73 (TVQHKKLRTPLN). Residues 74 to 96 (YILLNLAVADLFMVLGGFTTTLY) traverse the membrane as a helical segment. At 97-110 (TSLHGYFVFGPTGC) the chain is on the extracellular side. An intrachain disulfide couples cysteine 110 to cysteine 187. A helical transmembrane segment spans residues 111–133 (NVEGFFATLGGEIALWSLVVLAI). Positions 134 to 136 (ERY) match the 'Ionic lock' involved in activated form stabilization motif. Over 134–152 (ERYVVVCKPMSNFRFGENH) the chain is Cytoplasmic. The chain crosses the membrane as a helical span at residues 153 to 173 (AIMGVAFTWIMALACAAPPLV). Over 174-202 (GWSRYIPEGMQCSCGIDYYTLKPEVNNES) the chain is Extracellular. Zn(2+) is bound at residue glutamate 201. A helical transmembrane segment spans residues 203–224 (FVIYMFVVHFTIPLIIIFFCYG). Over 225-252 (QLVFTVKEAAAQQQESATTQKAEKEVTR) the chain is Cytoplasmic. Residues 253–274 (MVIIMVIAFLICWVPYASVAFY) form a helical membrane-spanning segment. Topologically, residues 275-286 (IFTHQGSNFGPI) are extracellular. Residue glutamine 279 coordinates Zn(2+). A helical transmembrane segment spans residues 287 to 308 (FMTIPAFFAKSSSIYNPVIYIM). Residue lysine 296 is modified to N6-(retinylidene)lysine. Residues 309–348 (MNKQFRNCMLTTICCGKNPLGDDEASATASKTETSQVAPA) are Cytoplasmic-facing. Residues cysteine 322 and cysteine 323 are each lipidated (S-palmitoyl cysteine). The interaction with SAG stretch occupies residues 330–348 (DDEASATASKTETSQVAPA). Serine 334 is modified (phosphoserine). Threonine 336 bears the Phosphothreonine mark. Phosphoserine is present on serine 338. Phosphothreonine is present on residues threonine 340 and threonine 342. Serine 343 is modified (phosphoserine).

Belongs to the G-protein coupled receptor 1 family. Opsin subfamily. In terms of assembly, homodimer. May form a complex composed of RHO, GRK1 and RCVRN in a Ca(2+)-dependent manner; RCVRN prevents the interaction between GRK1 and RHO. Interacts with GRK1. Interacts (phosphorylated form) with SAG. Interacts with GNAT1. Interacts with GNAT3. SAG and G-proteins compete for a common binding site. Interacts with PRCD; the interaction promotes PRCD stability. Forms a complex with ASAP1 and ARF4. Forms a complex with ASAP1, RAB11A, Rabin8/RAB3IP, ARF4 and RAB11FIP3; the complex regulates Golgi-to-cilia rhodopsin/RHO transport in photoreceptors. Post-translationally, phosphorylated on some or all of the serine and threonine residues present in the C-terminal region. In terms of processing, contains one covalently linked retinal chromophore. Upon light absorption, the covalently bound 11-cis-retinal is converted to all-trans-retinal. After hydrolysis of the Schiff base and release of the covalently bound all-trans-retinal, active rhodopsin is regenerated by binding of a fresh molecule of 11-cis-retinal.

It is found in the membrane. The protein resides in the cell projection. Its subcellular location is the cilium. It localises to the photoreceptor outer segment. Functionally, photoreceptor required for image-forming vision at low light intensity. Required for photoreceptor cell viability after birth. Light-induced isomerization of 11-cis to all-trans retinal triggers a conformational change that activates signaling via G-proteins. Subsequent receptor phosphorylation mediates displacement of the bound G-protein alpha subunit by the arrestin SAG and terminates signaling. The protein is Rhodopsin (RHO) of Oryctolagus cuniculus (Rabbit).